The primary structure comprises 216 residues: Elongation factor 1-beta (216 aa).

The tract at residues Gly71 to Ser131 is disordered. Residues Ala73–Ala89 show a composition bias toward low complexity. The span at Asp92 to Glu107 shows a compositional bias: acidic residues. Residues Glu108 to Gly128 show a composition bias toward basic and acidic residues.

This sequence belongs to the EF-1-beta/EF-1-delta family. As to quaternary structure, EF-1 is composed of 4 subunits: alpha, beta (1B-alpha=beta'), delta (1B-beta), and gamma (1B-gamma).

Its function is as follows. EF-1-beta and EF-1-beta' stimulate the exchange of GDP bound to EF-1-alpha to GTP. The polypeptide is Elongation factor 1-beta (Triticum aestivum (Wheat)).